The primary structure comprises 394 residues: Protein BUR2 (394 aa).

Disordered stretches follow at residues 1-32 and 372-394; these read MVLSASEEIANSQPSGNGKTSLDIKQNEGNPQ and MSERSIKRPSEPPAEQATKKPRF. Over residues 9–32 the composition is skewed to polar residues; the sequence is IANSQPSGNGKTSLDIKQNEGNPQ. The span at 372-381 shows a compositional bias: basic and acidic residues; the sequence is MSERSIKRPS.

As to quaternary structure, belongs to the BUR kinase complex.

The protein localises to the nucleus. Its function is as follows. Component of the BUR kinase complex involved in transcription regulation. This complex phosphorylates the UBC2/RAD6 ubiquitin-conjugating enzyme (E2), leading to monoubiquitination of histone H2B and the silencing of telomeric-associated genes. Also required for histone H3 methylation. Necessary for the recovery from pheromone-induced growth arrest in the cell cycle G1 phase. The kinase activity of the complex requires the presence of BUR2. Overexpression of BUR2 interferes with mitotic chromosome segregation. This Kluyveromyces lactis (strain ATCC 8585 / CBS 2359 / DSM 70799 / NBRC 1267 / NRRL Y-1140 / WM37) (Yeast) protein is Protein BUR2 (BUR2).